Reading from the N-terminus, the 288-residue chain is Probable endonuclease 4 (288 aa).

Zn(2+)-binding residues include H75, H115, E153, D187, H190, H224, D237, H239, and E269.

Belongs to the AP endonuclease 2 family. It depends on Zn(2+) as a cofactor.

The catalysed reaction is Endonucleolytic cleavage to 5'-phosphooligonucleotide end-products.. Functionally, endonuclease IV plays a role in DNA repair. It cleaves phosphodiester bonds at apurinic or apyrimidinic (AP) sites, generating a 3'-hydroxyl group and a 5'-terminal sugar phosphate. This Chlamydia muridarum (strain MoPn / Nigg) protein is Probable endonuclease 4.